The chain runs to 105 residues: MSPRRTSGGVVPVDRYRIDEGLIVVLVFAGRDERRRTVCFADKFGCVHIGNPDLYRPQTSLPQPLPISSHAISGSRFVETTNRADQQEPIGPNRAELFDQALHAG.

This is an uncharacterized protein from Mycobacterium bovis (strain ATCC BAA-935 / AF2122/97).